A 206-amino-acid polypeptide reads, in one-letter code: Ras-related protein Ral-B (206 aa).

21–29 (GSGGVGKSA) contributes to the GTP binding site. The Effector region signature appears at 43–51 (YEPTKADSY). GTP contacts are provided by residues 68–72 (DTAGQ), 128–131 (NKSD), and 158–160 (SAK). Residues 181–206 (MSENKDKNGRKSSKSKKSFKERCCLL) form a disordered region. The residue at position 203 (Cys203) is a Cysteine methyl ester. Cys203 is lipidated: S-geranylgeranyl cysteine. Residues 204-206 (CLL) constitute a propeptide, removed in mature form.

This sequence belongs to the small GTPase superfamily. Ras family. As to quaternary structure, interacts with EXOC2/Sec5 and EXOC8/Exo84. Interacts (via effector domain) with RALBP1. Post-translationally, prenylation is essential for membrane localization. In terms of processing, the farnesylated form confers resistance to the proapoptotic and anti-anchorage-dependent growth effects of some geranylgeranyltransferase I inhibitors.

The protein localises to the cell membrane. Its subcellular location is the midbody. The enzyme catalyses GTP + H2O = GDP + phosphate + H(+). With respect to regulation, alternates between an inactive form bound to GDP and an active form bound to GTP. Activated by a guanine nucleotide-exchange factor (GEF) and inactivated by a GTPase-activating protein (GAP). Multifunctional GTPase involved in a variety of cellular processes including gene expression, cell migration, cell proliferation, oncogenic transformation and membrane trafficking. Accomplishes its multiple functions by interacting with distinct downstream effectors. Acts as a GTP sensor for GTP-dependent exocytosis of dense core vesicles. Required both to stabilize the assembly of the exocyst complex and to localize functional exocyst complexes to the leading edge of migrating cells. Required for suppression of apoptosis. In late stages of cytokinesis, upon completion of the bridge formation between dividing cells, mediates exocyst recruitment to the midbody to drive abscission. Involved in ligand-dependent receptor mediated endocytosis of the EGF and insulin receptors. The protein is Ras-related protein Ral-B (Ralb) of Mus musculus (Mouse).